The sequence spans 283 residues: NFU1 iron-sulfur cluster scaffold homolog, mitochondrial (283 aa).

The N-terminal 30 residues, Met-1–Ile-30, are a transit peptide targeting the mitochondrion. The interval Ile-182–Val-250 is nifU. [4Fe-4S] cluster is bound by residues Cys-219 and Cys-222.

The protein belongs to the NifU family.

It is found in the mitochondrion. Functionally, molecular scaffold for [Fe-S] cluster assembly of mitochondrial iron-sulfur proteins. The sequence is that of NFU1 iron-sulfur cluster scaffold homolog, mitochondrial from Drosophila yakuba (Fruit fly).